Here is a 381-residue protein sequence, read N- to C-terminus: Chymosin (381 aa).

An N-terminal signal peptide occupies residues Met1 to Ala16. Positions Ser17–Leu58 are cleaved as a propeptide — activation peptide. The region spanning Tyr74–Ala378 is the Peptidase A1 domain. The active site involves Asp92. Cys105 and Cys110 form a disulfide bridge. Asn158 carries an N-linked (GlcNAc...) asparagine glycan. Cysteines 265 and 269 form a disulfide. Asp274 is a catalytic residue. Cys308 and Cys341 are oxidised to a cystine. An N-linked (GlcNAc...) asparagine glycan is attached at Asn349.

Belongs to the peptidase A1 family.

It carries out the reaction Broad specificity similar to that of pepsin A. Clots milk by cleavage of a single 104-Ser-Phe-|-Met-Ala-107 bond in kappa-chain of casein.. Chymosin is synthesized in the mucosa of the abomasum (fourth stomach) of young (unweaned) ruminants. The enzyme hydrolyzes casein to paracasein. This is Chymosin from Camelus dromedarius (Dromedary).